The primary structure comprises 453 residues: Glutamyl-tRNA(Gln) amidotransferase subunit A (453 aa).

Active-site charge relay system residues include lysine 53 and serine 128. The active-site Acyl-ester intermediate is serine 152.

It belongs to the amidase family. GatA subfamily. Heterotrimer of A, B and C subunits.

The enzyme catalyses L-glutamyl-tRNA(Gln) + L-glutamine + ATP + H2O = L-glutaminyl-tRNA(Gln) + L-glutamate + ADP + phosphate + H(+). Functionally, allows the formation of correctly charged Gln-tRNA(Gln) through the transamidation of misacylated Glu-tRNA(Gln) in organisms which lack glutaminyl-tRNA synthetase. The reaction takes place in the presence of glutamine and ATP through an activated gamma-phospho-Glu-tRNA(Gln). The protein is Glutamyl-tRNA(Gln) amidotransferase subunit A of Helicobacter pylori (strain G27).